The primary structure comprises 172 residues: uncharacterized protein (172 aa).

2 disordered regions span residues 1–54 and 82–111; these read MPRR…GGSS and ITGGFSGSGSNNAPADTSVPQSSYSNSVPE. Over residues 14-29 the composition is skewed to low complexity; that stretch reads AAPARSASTAAALPPR. Over residues 30–47 the composition is skewed to pro residues; it reads TMAPPPAPSRVQQAPPPT. Positions 89 to 109 are enriched in polar residues; that stretch reads SGSNNAPADTSVPQSSYSNSV.

This is an uncharacterized protein from Schizosaccharomyces pombe (strain 972 / ATCC 24843) (Fission yeast).